Here is a 619-residue protein sequence, read N- to C-terminus: DNA mismatch repair protein MutL (619 aa).

A disordered region spans residues 358-401; sequence GGNQFARPSEAREAATRFSITSSREPAASGGSSGGASWPHAQPG.

This sequence belongs to the DNA mismatch repair MutL/HexB family.

Its function is as follows. This protein is involved in the repair of mismatches in DNA. It is required for dam-dependent methyl-directed DNA mismatch repair. May act as a 'molecular matchmaker', a protein that promotes the formation of a stable complex between two or more DNA-binding proteins in an ATP-dependent manner without itself being part of a final effector complex. The chain is DNA mismatch repair protein MutL from Klebsiella pneumoniae (strain 342).